A 405-amino-acid polypeptide reads, in one-letter code: MTQSQYRPGPDANGLFGSFGGRYVAETLMPLVLDLAREYEAAKADPKFLEELAYFQRDYIGRPNPLYFAERLTEHCGGAKIFFKREELNHTGAHKVNNCIGQVLLAKRMGKKRLIAETGAGMHGVATATVAARFGLPCVIYMGATDIERQQANVFRMKLLGAEIVPVTAGTGTLKDAMNEALRDWVTNVDDTFYLIGTVAGPHPYPAMVRDFQSIIGKETRAQLQEKEGRLPDSLIACVGGGSNAMGLFHEFLEDESVKIIGVEAGGHGVNTGKHAASLNGGVPGVLHGNRTYLLQDDDGQITDAHSISAGLDYPGIGPEHAYLHEVKRVEYVSITDDEALDAFHATCRLEGIIPALETSHALAEAIKRAPNLPKDHLMVICLSGRGDKDMQTVMNHMAAQEKQA.

K95 bears the N6-(pyridoxal phosphate)lysine mark.

It belongs to the TrpB family. Tetramer of two alpha and two beta chains. It depends on pyridoxal 5'-phosphate as a cofactor.

It catalyses the reaction (1S,2R)-1-C-(indol-3-yl)glycerol 3-phosphate + L-serine = D-glyceraldehyde 3-phosphate + L-tryptophan + H2O. It functions in the pathway amino-acid biosynthesis; L-tryptophan biosynthesis; L-tryptophan from chorismate: step 5/5. The beta subunit is responsible for the synthesis of L-tryptophan from indole and L-serine. The protein is Tryptophan synthase beta chain of Pseudomonas putida (strain W619).